A 156-amino-acid polypeptide reads, in one-letter code: ATP synthase subunit b (156 aa).

Residues 12–32 (VAFLIFVLFCMKYVWPPVITA) traverse the membrane as a helical segment.

It belongs to the ATPase B chain family. As to quaternary structure, F-type ATPases have 2 components, F(1) - the catalytic core - and F(0) - the membrane proton channel. F(1) has five subunits: alpha(3), beta(3), gamma(1), delta(1), epsilon(1). F(0) has three main subunits: a(1), b(2) and c(10-14). The alpha and beta chains form an alternating ring which encloses part of the gamma chain. F(1) is attached to F(0) by a central stalk formed by the gamma and epsilon chains, while a peripheral stalk is formed by the delta and b chains.

It is found in the cell inner membrane. Its function is as follows. F(1)F(0) ATP synthase produces ATP from ADP in the presence of a proton or sodium gradient. F-type ATPases consist of two structural domains, F(1) containing the extramembraneous catalytic core and F(0) containing the membrane proton channel, linked together by a central stalk and a peripheral stalk. During catalysis, ATP synthesis in the catalytic domain of F(1) is coupled via a rotary mechanism of the central stalk subunits to proton translocation. Component of the F(0) channel, it forms part of the peripheral stalk, linking F(1) to F(0). The protein is ATP synthase subunit b of Pseudomonas putida (strain ATCC 47054 / DSM 6125 / CFBP 8728 / NCIMB 11950 / KT2440).